The following is a 464-amino-acid chain: Protein FAM90A3 (464 aa).

Disordered regions lie at residues 1 to 42 (MMAR…DPRL), 70 to 389 (PATL…HDGA), and 411 to 437 (APSF…SEAP). Basic and acidic residues-rich tracts occupy residues 74–89 (GKKE…KPRV) and 97–114 (NKDK…DPQR). The segment covering 180 to 197 (LASLSPLRKASLSSSSSL) has biased composition (low complexity).

It belongs to the FAM90 family.

This Homo sapiens (Human) protein is Protein FAM90A3.